Consider the following 708-residue polypeptide: Exocyst complex component 5 (708 aa).

Residue alanine 2 is modified to N-acetylalanine. Residues 40 to 101 (KRLLEEFVNH…AFQHFQELDE (62 aa)) are a coiled coil. Threonine 122, threonine 395, and threonine 405 each carry phosphothreonine. Residue serine 412 is modified to Phosphoserine.

It belongs to the SEC10 family. In terms of assembly, the exocyst complex is composed of EXOC1, EXOC2, EXOC3, EXOC4, EXOC5, EXOC6, EXOC7 and EXOC8. Interacts with EXOC3L1.

Its subcellular location is the cytoplasm. The protein localises to the midbody. Component of the exocyst complex involved in the docking of exocytic vesicles with fusion sites on the plasma membrane. In Mus musculus (Mouse), this protein is Exocyst complex component 5 (Exoc5).